The chain runs to 344 residues: N-acetyl-gamma-glutamyl-phosphate reductase (344 aa).

The active site involves C150.

This sequence belongs to the NAGSA dehydrogenase family. Type 1 subfamily.

It is found in the cytoplasm. It carries out the reaction N-acetyl-L-glutamate 5-semialdehyde + phosphate + NADP(+) = N-acetyl-L-glutamyl 5-phosphate + NADPH + H(+). Its pathway is amino-acid biosynthesis; L-arginine biosynthesis; N(2)-acetyl-L-ornithine from L-glutamate: step 3/4. Its function is as follows. Catalyzes the NADPH-dependent reduction of N-acetyl-5-glutamyl phosphate to yield N-acetyl-L-glutamate 5-semialdehyde. This Azotobacter vinelandii (strain DJ / ATCC BAA-1303) protein is N-acetyl-gamma-glutamyl-phosphate reductase.